We begin with the raw amino-acid sequence, 130 residues long: Small ribosomal subunit protein uS8 (130 aa).

Belongs to the universal ribosomal protein uS8 family. Part of the 30S ribosomal subunit.

Functionally, one of the primary rRNA binding proteins, it binds directly to 16S rRNA central domain where it helps coordinate assembly of the platform of the 30S subunit. This chain is Small ribosomal subunit protein uS8, found in Methanotorris igneus (Methanococcus igneus).